A 366-amino-acid polypeptide reads, in one-letter code: Cobalt-precorrin-5B C(1)-methyltransferase (366 aa).

Belongs to the CbiD family.

It catalyses the reaction Co-precorrin-5B + S-adenosyl-L-methionine = Co-precorrin-6A + S-adenosyl-L-homocysteine. Its pathway is cofactor biosynthesis; adenosylcobalamin biosynthesis; cob(II)yrinate a,c-diamide from sirohydrochlorin (anaerobic route): step 6/10. In terms of biological role, catalyzes the methylation of C-1 in cobalt-precorrin-5B to form cobalt-precorrin-6A. In Pseudomonas aeruginosa (strain UCBPP-PA14), this protein is Cobalt-precorrin-5B C(1)-methyltransferase.